The chain runs to 400 residues: Arabinan endo-1,5-alpha-L-arabinosidase B (400 aa).

The signal sequence occupies residues 1–16 (MAVIFVLFFLVSMALS). A glycan (N-linked (GlcNAc...) asparagine) is linked at Asn-24. The Proton acceptor role is filled by Asp-70. The N-linked (GlcNAc...) asparagine glycan is linked to Asn-184. The active-site Proton donor is the Glu-277. Asn-372 carries an N-linked (GlcNAc...) asparagine glycan.

This sequence belongs to the glycosyl hydrolase 43 family.

It localises to the secreted. It catalyses the reaction Endohydrolysis of (1-&gt;5)-alpha-arabinofuranosidic linkages in (1-&gt;5)-arabinans.. The protein operates within glycan metabolism; L-arabinan degradation. Its function is as follows. Endo-1,5-alpha-L-arabinanase involved in degradation of pectin. Its preferred substrate is linear 1,5-alpha-L-arabinan. The sequence is that of Arabinan endo-1,5-alpha-L-arabinosidase B (abnB) from Emericella nidulans (strain FGSC A4 / ATCC 38163 / CBS 112.46 / NRRL 194 / M139) (Aspergillus nidulans).